We begin with the raw amino-acid sequence, 468 residues long: Tapasin-related protein (468 aa).

An N-terminal signal peptide occupies residues 1-18 (MGTQEGWCLLLCLALSGA). The Lumenal segment spans residues 19-405 (AETKPHPAEG…STQVVPPERR (387 aa)). The Ig-like V-type domain maps to 181 to 297 (PQGTVRTAVE…SLYRAQQIIQ (117 aa)). 2 disulfide bridges follow: Cys212/Cys283 and Cys321/Cys382. Positions 304 to 394 (PKVRLSLANE…THISLEEPLG (91 aa)) constitute an Ig-like C1-type domain. Residues 406 to 426 (TALGVIFASSLFLLALMFLGL) traverse the membrane as a helical segment. Over 427-468 (QRRQAPTGLGLLQAERWETTSCADTQSSHLHEDRTARVSQPS) the chain is Cytoplasmic. The tract at residues 449–468 (ADTQSSHLHEDRTARVSQPS) is disordered.

As to quaternary structure, interacts with peptide-free HLA-A*02-B2M complexes or those loaded with low affinity peptides, likely facilitating peptide exchange onto higher affinity peptides. Interacts with MR1 in a ligand-independent way; this interaction may stabilize MR1 pool and facilitate ligand loading and dissociation.

The protein resides in the cell membrane. The protein localises to the endoplasmic reticulum membrane. It is found in the microsome membrane. Its subcellular location is the golgi apparatus membrane. In terms of biological role, component of the antigen processing and presentation pathway, which binds to MHC class I coupled with beta2-microglobulin/B2M. Association between TAPBPR and MHC class I occurs in the absence of a functional peptide-loading complex (PLC). The sequence is that of Tapasin-related protein (TAPBPL) from Homo sapiens (Human).